Consider the following 473-residue polypeptide: Fumarate hydratase class II (473 aa).

Residues 105 to 107 (SGT), 130 to 133 (HPND), 140 to 142 (SSN), and Thr-188 contribute to the substrate site. The Proton donor/acceptor role is filled by His-189. Residue Ser-319 is part of the active site. Residues Ser-320 and 325 to 327 (KVN) contribute to the substrate site.

Belongs to the class-II fumarase/aspartase family. Fumarase subfamily. In terms of assembly, homotetramer.

The protein localises to the cytoplasm. The catalysed reaction is (S)-malate = fumarate + H2O. It functions in the pathway carbohydrate metabolism; tricarboxylic acid cycle; (S)-malate from fumarate: step 1/1. In terms of biological role, involved in the TCA cycle. Catalyzes the stereospecific interconversion of fumarate to L-malate. The chain is Fumarate hydratase class II from Xylella fastidiosa (strain 9a5c).